A 146-amino-acid polypeptide reads, in one-letter code: uncharacterized protein (146 aa).

In terms of domain architecture, HTH marR-type spans V9–H141. A DNA-binding region (H-T-H motif) is located at residues I55–K78.

This is an uncharacterized protein from Bacillus subtilis (strain 168).